The sequence spans 515 residues: Sodium/hydrogen exchanger 9B1 (515 aa).

The span at 1-10 shows a compositional bias: basic and acidic residues; that stretch reads MHTTESKNEH. A disordered region spans residues 1–32; it reads MHTTESKNEHLEDENFQTSTTPQSLIDPNNTA. Residues 16–32 show a composition bias toward polar residues; sequence FQTSTTPQSLIDPNNTA. 13 helical membrane-spanning segments follow: residues 66 to 86, 95 to 115, 116 to 136, 152 to 172, 187 to 207, 215 to 235, 260 to 280, 284 to 304, 337 to 357, 368 to 388, 407 to 427, 431 to 451, and 472 to 492; these read VIIT…SILG, LFGL…LQLI, RIPL…GFTI, WSSI…GLGL, LAVG…HFIM, FLLG…YMMV, ILAI…GGIL, IASI…GFFV, IGLH…AGTK, IITT…GAEV, LALC…GFSF, IFIA…GPLA, and VAFL…GILG.

The protein belongs to the monovalent cation:proton antiporter 1 (CPA1) transporter (TC 2.A.36) family. Expressed only in the testis.

It is found in the cell projection. The protein localises to the cilium. It localises to the flagellum membrane. Sperm-specific Na(+)/H(+) exchanger involved in intracellular pH regulation of spermatozoa. Involved in sperm motility and fertility. The protein is Sodium/hydrogen exchanger 9B1 of Homo sapiens (Human).